A 278-amino-acid polypeptide reads, in one-letter code: Achaete-scute homolog 5 (278 aa).

Residues 1–66 are disordered; that stretch reads MPMGAAERGA…GPFGGGLALG (66 aa). A bHLH domain is found at 155–207; it reads AFIQKRNERERQRVKCVNEGYARLRGHLPGALAEKRLSKVETLRAAIRYIKYL. The tract at residues 214–278 is disordered; the sequence is APDGSTPPAS…PFLESEESWH (65 aa). Residues 230 to 239 show a composition bias toward pro residues; the sequence is GPCPAPPATP. A compositionally biased stretch (basic and acidic residues) spans 240–249; it reads RPDRPGDGEA. The span at 252–271 shows a compositional bias: low complexity; that stretch reads PSSLVPESSESSCFSPSPFL.

Interacts with transcription factor TCF3/E12.

It is found in the nucleus. In terms of biological role, transcription factor. Probably binds E-box motifs 5'-CANNTG-3' in complex with transcription factor TCF3/E12. Negatively modulates transcription of target genes such as CDH1/E-cadherin, perhaps by recruiting the PRC2 repressive complex to regulatory elements. Regulates ameloblast development and tooth germ growth, perhaps acting by positively modulating migration of inner enamel epithelium (IEE) cells. Plays a role in enamel formation. This chain is Achaete-scute homolog 5 (ASCL5), found in Homo sapiens (Human).